Here is a 281-residue protein sequence, read N- to C-terminus: MNRMSNTVIGFLNILTLISSIVLLGSALWMGRSKTTCEHFLQKPLLILGLAILILSVAGLVGACCDVAWVLWVYLFFMVFIIVALMGLTLFGFIVTSHSGGVVVDGRVYKEFKLEAYHPWLKTRVVDTNYWVTIKTCLLGSVTCSKLALWTPLDYLQKDLSPLQSGCCKPPTSCVYNTDTVIQQDPDCYRWNNAATVLCYDCDTCRAGVLETVRRDWHKLSLVNVIVVIFLIAVYCVGCCAFKNAKRPQHYGFPYGRYGMSKSRPGWEQSWSRWWHGRDRY.

The Cytoplasmic segment spans residues 1-7 (MNRMSNT). The helical transmembrane segment at 8–28 (VIGFLNILTLISSIVLLGSAL) threads the bilayer. Residues 29-44 (WMGRSKTTCEHFLQKP) lie on the Extracellular side of the membrane. The helical transmembrane segment at 45-65 (LLILGLAILILSVAGLVGACC) threads the bilayer. Residues 66 to 74 (DVAWVLWVY) lie on the Cytoplasmic side of the membrane. Residues 75–95 (LFFMVFIIVALMGLTLFGFIV) traverse the membrane as a helical segment. Topologically, residues 96 to 221 (TSHSGGVVVD…TVRRDWHKLS (126 aa)) are extracellular. The helical transmembrane segment at 222–242 (LVNVIVVIFLIAVYCVGCCAF) threads the bilayer. Residues 243-281 (KNAKRPQHYGFPYGRYGMSKSRPGWEQSWSRWWHGRDRY) lie on the Cytoplasmic side of the membrane.

This sequence belongs to the tetraspanin (TM4SF) family.

The protein localises to the membrane. In terms of biological role, may be involved in the regulation of cell differentiation. This is Tetraspanin-5 (TET5) from Arabidopsis thaliana (Mouse-ear cress).